Reading from the N-terminus, the 523-residue chain is SWI/SNF and RSC complexes subunit arp9 (523 aa).

Residues 56-72 (INMEDPNVKTDETKVET) are compositionally biased toward basic and acidic residues. 2 disordered regions span residues 56–92 (INME…KNMG) and 319–339 (QKER…NTDV). The segment covering 79–92 (QPSNSNVTEEKNMG) has biased composition (polar residues). Residues 319 to 336 (QKEREKNGESEKDEKPDN) show a composition bias toward basic and acidic residues.

Belongs to the actin family. Component of the RSC complex composed of at least arp9, arp42, rsc1, rsc4, rsc7, rsc9, rsc58, sfh1, snf21, ssr1, ssr2, ssr3 and ssr4. The complex interacts with histone and histone variant components of centromeric chromatin. Component of the SWI/SNF global transcription activator complex composed of at least arp9, arp42, snf5, snf22, snf30, sbf59, sol1, ssr1, ssr2, ssr3, ssr4 and tfg3.

It localises to the cytoplasm. Its subcellular location is the nucleus. In terms of biological role, component of the chromatin structure remodeling complex (RSC), which is involved in transcription regulation and nucleosome positioning. Controls particularly membrane and organelle development genes. Part of the SWI/SNF complex, an ATP-dependent chromatin remodeling complex, required for the positive and negative regulation of gene expression of a large number of genes. It changes chromatin structure by altering DNA-histone contacts within a nucleosome, leading eventually to a change in nucleosome position, thus facilitating or repressing binding of gene-specific transcription factors. The polypeptide is SWI/SNF and RSC complexes subunit arp9 (arp9) (Schizosaccharomyces pombe (strain 972 / ATCC 24843) (Fission yeast)).